A 203-amino-acid polypeptide reads, in one-letter code: Putative 3-methyladenine DNA glycosylase (203 aa).

This sequence belongs to the DNA glycosylase MPG family.

The sequence is that of Putative 3-methyladenine DNA glycosylase from Clostridium botulinum (strain ATCC 19397 / Type A).